The following is a 63-amino-acid chain: uncharacterized protein (63 aa).

Residues 3–23 (IIYIILGFLSLAIGIIGIFPS) traverse the membrane as a helical segment.

It is found in the membrane. This is an uncharacterized protein from Haemophilus influenzae (strain ATCC 51907 / DSM 11121 / KW20 / Rd).